The primary structure comprises 219 residues: DnaJ homolog subfamily C member 30, mitochondrial (219 aa).

The transit peptide at 1–38 (MAAARCLGWTLSPLWRWWQVRGLPPSSATGLCSRGRTY) directs the protein to the mitochondrion. The J domain maps to 42-107 (ALYELLGVPS…ILRRKYDRGL (66 aa)). Residues 109-148 (SDQDLRGPGVKPSKTPVADPAPPRPPPYTPRAPGGSRASP) are disordered. Over residues 127 to 138 (DPAPPRPPPYTP) the composition is skewed to pro residues. Residues 202-218 (ATFFVVLFLIFVFVGFR) form a helical membrane-spanning segment.

Associates with the ATP synthase complex. Interacts with MT-ATP6; interaction is direct. Interacts with ATP5MC2; interaction is direct. In terms of tissue distribution, in brain, expressed in gray matter structures.

It localises to the mitochondrion inner membrane. Its function is as follows. Mitochondrial protein enriched in neurons that acts as a regulator of mitochondrial respiration. Associates with the ATP synthase complex and facilitates ATP synthesis. May be a chaperone protein involved in the turnover of the subunits of mitochondrial complex I N-module. It facilitates the degradation of N-module subunits damaged by oxidative stress, and contributes to complex I functional efficiency. This chain is DnaJ homolog subfamily C member 30, mitochondrial, found in Mus musculus (Mouse).